A 162-amino-acid chain; its full sequence is 2-amino-4-hydroxy-6-hydroxymethyldihydropteridine pyrophosphokinase (162 aa).

It belongs to the HPPK family.

The enzyme catalyses 6-hydroxymethyl-7,8-dihydropterin + ATP = (7,8-dihydropterin-6-yl)methyl diphosphate + AMP + H(+). It functions in the pathway cofactor biosynthesis; tetrahydrofolate biosynthesis; 2-amino-4-hydroxy-6-hydroxymethyl-7,8-dihydropteridine diphosphate from 7,8-dihydroneopterin triphosphate: step 4/4. Catalyzes the transfer of pyrophosphate from adenosine triphosphate (ATP) to 6-hydroxymethyl-7,8-dihydropterin, an enzymatic step in folate biosynthesis pathway. In Streptococcus pyogenes serotype M3 (strain ATCC BAA-595 / MGAS315), this protein is 2-amino-4-hydroxy-6-hydroxymethyldihydropteridine pyrophosphokinase (folK).